A 210-amino-acid polypeptide reads, in one-letter code: UPF0637 protein RBAM_014510 (210 aa).

This sequence belongs to the UPF0637 family.

This Bacillus velezensis (strain DSM 23117 / BGSC 10A6 / LMG 26770 / FZB42) (Bacillus amyloliquefaciens subsp. plantarum) protein is UPF0637 protein RBAM_014510.